The chain runs to 352 residues: UDP-N-acetylglucosamine--N-acetylmuramyl-(pentapeptide) pyrophosphoryl-undecaprenol N-acetylglucosamine transferase (352 aa).

UDP-N-acetyl-alpha-D-glucosamine is bound by residues 13 to 15 (TGG), Asn-125, Arg-161, Ser-189, Ile-242, 261 to 266 (ALTVSE), and Gln-286.

The protein belongs to the glycosyltransferase 28 family. MurG subfamily.

The protein resides in the cell inner membrane. The enzyme catalyses di-trans,octa-cis-undecaprenyl diphospho-N-acetyl-alpha-D-muramoyl-L-alanyl-D-glutamyl-meso-2,6-diaminopimeloyl-D-alanyl-D-alanine + UDP-N-acetyl-alpha-D-glucosamine = di-trans,octa-cis-undecaprenyl diphospho-[N-acetyl-alpha-D-glucosaminyl-(1-&gt;4)]-N-acetyl-alpha-D-muramoyl-L-alanyl-D-glutamyl-meso-2,6-diaminopimeloyl-D-alanyl-D-alanine + UDP + H(+). It participates in cell wall biogenesis; peptidoglycan biosynthesis. Its function is as follows. Cell wall formation. Catalyzes the transfer of a GlcNAc subunit on undecaprenyl-pyrophosphoryl-MurNAc-pentapeptide (lipid intermediate I) to form undecaprenyl-pyrophosphoryl-MurNAc-(pentapeptide)GlcNAc (lipid intermediate II). This chain is UDP-N-acetylglucosamine--N-acetylmuramyl-(pentapeptide) pyrophosphoryl-undecaprenol N-acetylglucosamine transferase, found in Erwinia tasmaniensis (strain DSM 17950 / CFBP 7177 / CIP 109463 / NCPPB 4357 / Et1/99).